The chain runs to 269 residues: Autophagy-related protein 5 (269 aa).

K102 is covalently cross-linked (Glycyl lysine isopeptide (Lys-Gly) (interchain with G-Cter in ATG12)).

Belongs to the ATG5 family. As to quaternary structure, conjugated with ATG12. The ATG5-ATG12 conjugate forms a complex with several units of ATG16. The ATG12-ATG5 conjugate also associates with ATG3. In terms of processing, conjugated to ATG12; which is essential for autophagy. Conjugation with ATG12 involves ATG7 as an E1-like activating enzyme and ATG10 as an E2-like conjugating enzyme.

The protein localises to the preautophagosomal structure membrane. Involved in cytoplasm to vacuole transport (Cvt) and autophagic vesicle formation. Autophagy is essential for maintenance of amino acid levels and protein synthesis under nitrogen starvation. Required for selective autophagic degradation of the nucleus (nucleophagy). Also required for mitophagy, which eliminates defective or superfluous mitochondria in order to fulfill cellular energy requirements and prevent excess ROS production. Conjugation with ATG12, through a ubiquitin-like conjugating system involving ATG7 as an E1-like activating enzyme and ATG10 as an E2-like conjugating enzyme, is essential for its function. The ATG12-ATG5 conjugate acts as an E3-like enzyme which is required for lipidation of ATG8 and ATG8 association to the vesicle membranes. ATG12-ATG5 rearranges the ATG3 catalytic center and enhances its E2 activity. Required for proper vegetative growth, asexual/sexual reproduction, but, unlike several plant and animal pathogenic fungi, where ATG5 is required for infection, in B.bassiana it is dispensable for pathogenesis. The sequence is that of Autophagy-related protein 5 from Beauveria bassiana (strain ARSEF 2860) (White muscardine disease fungus).